A 998-amino-acid polypeptide reads, in one-letter code: Kinesin-like protein KIF19 (998 aa).

The Kinesin motor domain maps to 11–346 (QLMVALRVRP…LTYAGRAKNI (336 aa)). 104-111 (GPTGCGKT) provides a ligand contact to ATP. Coiled-coil stretches lie at residues 360–391 (HIAQ…RGQA) and 424–452 (EQLA…EVQI). The span at 482–494 (ECYAKDDSEKDSD) shows a compositional bias: basic and acidic residues. Residues 482 to 503 (ECYAKDDSEKDSDTGDDQPDIL) form a disordered region. Residues 507-552 (EVAAARESIAALVDEQKQLRKQKLALEQRCRELRARGRRLEETLPR) adopt a coiled-coil conformation. 4 stretches are compositionally biased toward polar residues: residues 662–676 (SSLP…SLTP), 684–697 (KTLS…QNSA), 746–761 (SLGS…SENL), and 836–852 (TLQH…STGE). Disordered regions lie at residues 662–706 (SSLP…TESE), 746–765 (SLGS…SEIP), 794–911 (GTEG…THLL), and 948–998 (KLPP…SRHN). Over residues 989-998 (HGKDGCSRHN) the composition is skewed to basic and acidic residues.

The protein belongs to the TRAFAC class myosin-kinesin ATPase superfamily. Kinesin family.

Its subcellular location is the cytoplasm. The protein resides in the cytoskeleton. The protein localises to the cell projection. It is found in the cilium. Its function is as follows. Plus end-directed microtubule-dependent motor protein that regulates the length of motile cilia by mediating depolymerization of microtubules at ciliary tips. The sequence is that of Kinesin-like protein KIF19 (KIF19) from Homo sapiens (Human).